Here is a 124-residue protein sequence, read N- to C-terminus: Small ribosomal subunit protein uS12 (124 aa).

The disordered stretch occupies residues 1 to 25 (MATINQLVRKPRQATTYKSASPALD). Aspartate 89 carries the 3-methylthioaspartic acid modification.

It belongs to the universal ribosomal protein uS12 family. As to quaternary structure, part of the 30S ribosomal subunit. Contacts proteins S8 and S17. May interact with IF1 in the 30S initiation complex.

With S4 and S5 plays an important role in translational accuracy. Its function is as follows. Interacts with and stabilizes bases of the 16S rRNA that are involved in tRNA selection in the A site and with the mRNA backbone. Located at the interface of the 30S and 50S subunits, it traverses the body of the 30S subunit contacting proteins on the other side and probably holding the rRNA structure together. The combined cluster of proteins S8, S12 and S17 appears to hold together the shoulder and platform of the 30S subunit. The sequence is that of Small ribosomal subunit protein uS12 from Xanthomonas campestris pv. campestris (strain 8004).